The primary structure comprises 102 residues: Exocrine gland-secreted peptide 1 (102 aa).

Positions 1–22 (MTSLPVLLFLIILLLPSMITEG) are cleaved as a signal peptide. Cys63 and Cys95 are disulfide-bonded.

Belongs to the exocrine gland-secreted peptide family. In terms of assembly, monomer. As to expression, expressed in the extraorbital lacrimal gland from where it is secreted into tears.

The protein resides in the secreted. In terms of biological role, male-specific phermone which is recognized by the Vmn2r116/V2rp5 receptor in the vomeronasal organ (VNO) and enhances female sexual receptive behavior (lordosis) upon male mounting, resulting in successful copulation. The sequence is that of Exocrine gland-secreted peptide 1 from Mus musculus (Mouse).